The sequence spans 88 residues: uncharacterized protein (88 aa).

The tract at residues 1–88 is disordered; that stretch reads MPHLPELSKQ…IRRGNPSGVA (88 aa). A compositionally biased stretch (basic and acidic residues) spans 21–65; the sequence is YRAKGEDLENSHHNNESRLAEGVHYDRNKAPALQEREKASTEKVN.

Involved in osmoadaptation. This is an uncharacterized protein from Emericella nidulans (strain FGSC A4 / ATCC 38163 / CBS 112.46 / NRRL 194 / M139) (Aspergillus nidulans).